A 918-amino-acid polypeptide reads, in one-letter code: Whirlin (918 aa).

Residues 141–224 enclose the PDZ 1 domain; that stretch reads LVSLRRAKAH…LVLSVYSAGR (84 aa). The disordered stretch occupies residues 240–266; it reads PQGRSTSPPSSLPQPHGSTLRQREDDR. In terms of domain architecture, PDZ 2 spans 280–362; the sequence is KVNLVLGDGR…LILTVKDVGR (83 aa). 3 disordered regions span residues 387–407, 503–538, and 560–824; these read NSAG…GFYK, SMKA…TSTT, and EGTG…LEPT. The span at 522-538 shows a compositional bias: low complexity; it reads SYSDTGSSTGSHGTSTT. The span at 563–572 shows a compositional bias: polar residues; it reads GETTQGSTNA. 2 stretches are compositionally biased toward pro residues: residues 591–600 and 638–649; these read IKPPPPPPPL and RSPPPGTAPTPG. The segment covering 654 to 672 has biased composition (polar residues); that stretch reads QDSPSSPIYASISHANPSS. At Ser696 the chain carries Phosphoserine. Polar residues-rich tracts occupy residues 754 to 773 and 783 to 798; these read QTRT…TLSE and EAST…SAKN. A compositionally biased stretch (basic and acidic residues) spans 800–811; the sequence is NGKEQPRTERTA. The PDZ 3 domain maps to 827 to 910; sequence LVRVRKSAAT…TKERDYIDFL (84 aa).

In terms of assembly, forms homooligomers. Interacts (via C-terminal PDZ domain) with MYO15A; this interaction is necessary for localization of WHRN to stereocilia tips. Interacts (via C-terminal PDZ domain) with MPP1/p55. Interacts with LRRC4C/NGL1. Interacts with MYO7A. Interacts with RPGR. Interacts with EPS8. Interacts with CASK. Interacts with CIB2. Component of USH2 complex, composed of ADGRV1, PDZD7, USH2A and WHRN. Interacts (via PDZ domains) with PDZD7; the interaction is direct. Interacts (via N-terminal PDZ domain) with USH2A (via cytoplasmic region). Interacts with ADGRV1/MASS1 (via cytoplasmic region). Expressed in the retina. Colocalizes with RPGR in the photoreceptor connecting cilium, a thin bridge linking the cell body and the light-sensing outer segment (at protein level). Detected in the inner ear throughout development from embryonic day 12 to 20 days after birth. Displays a dynamic pattern of expression after birth, demonstrating an ordered appearance and fade-out across stereocilia rows. Isoforms 5, 6, 7 and 8 are not detected in the retina.

Its subcellular location is the cytoplasm. The protein localises to the cell projection. It localises to the stereocilium. The protein resides in the growth cone. It is found in the photoreceptor inner segment. Its subcellular location is the synapse. Involved in hearing and vision as member of the USH2 complex. Necessary for elongation and maintenance of inner and outer hair cell stereocilia in the organ of Corti in the inner ear. Involved in the maintenance of the hair bundle ankle region, which connects stereocilia in cochlear hair cells of the inner ear. In retina photoreceptors, required for the maintenance of periciliary membrane complex that seems to play a role in regulating intracellular protein transport. This is Whirlin from Mus musculus (Mouse).